We begin with the raw amino-acid sequence, 93 residues long: Small ribosomal subunit protein uS19 (93 aa).

It belongs to the universal ribosomal protein uS19 family.

In terms of biological role, protein S19 forms a complex with S13 that binds strongly to the 16S ribosomal RNA. This is Small ribosomal subunit protein uS19 from Helicobacter acinonychis (strain Sheeba).